A 518-amino-acid chain; its full sequence is Voltage-gated potassium channel regulatory subunit KCNG2 (518 aa).

The Cytoplasmic portion of the chain corresponds to Met-1–Ile-214. A helical membrane pass occupies residues Pro-215–Ile-236. Topologically, residues Ser-237–Asp-257 are extracellular. The chain crosses the membrane as a helical span at residues Ile-258 to Gln-279. Topologically, residues Ala-280–Pro-290 are cytoplasmic. Residues Leu-291–Ala-311 traverse the membrane as a helical segment. The Extracellular segment spans residues Ser-312–Val-331. The chain crosses the membrane as a helical; Voltage-sensor span at residues Gly-332–His-352. Over Ser-353–Thr-367 the chain is Cytoplasmic. Residues Arg-368–Tyr-389 form a helical membrane-spanning segment. Residues Leu-390–Ile-404 lie on the Extracellular side of the membrane. An intramembrane region (helical) is located at residues Pro-405–Thr-416. A Selectivity filter motif is present at residues Thr-417–Asp-422. An intramembrane segment occupies Thr-417 to Val-424. Residues Pro-425 to Gln-431 are Extracellular-facing. The chain crosses the membrane as a helical span at residues Val-432–Tyr-460. Topologically, residues Ser-461–Cys-518 are cytoplasmic. The interval Arg-473–Cys-518 is disordered. Basic and acidic residues predominate over residues Ala-501–Cys-518.

Belongs to the potassium channel family. G (TC 1.A.1.2) subfamily. Kv6.2/KCNG2 sub-subfamily. As to quaternary structure, heterodimer with KCNB1.

The protein resides in the cell membrane. Regulatory alpha-subunit of the voltage-gated potassium (Kv) channel which, when coassembled with KCNB1, can modulate the kinetics and conductance-voltage relationship. Modulates channel activity by shifting the threshold and the half-maximal activation to more negative values. Potassium channel subunit that does not form functional channels by itself. In Gallus gallus (Chicken), this protein is Voltage-gated potassium channel regulatory subunit KCNG2.